Reading from the N-terminus, the 77-residue chain is Tachyplesin-2 (77 aa).

An N-terminal signal peptide occupies residues 1-23; sequence MKKLVIALCLMMVLAVMVEEAEA. Intrachain disulfides connect Cys26–Cys39 and Cys30–Cys35. An Arginine amide modification is found at Arg40. Positions 41–77 are excised as a propeptide; it reads GKRNEVRQYRDRGYDVRAIPDETFFTRQDEDEDDDEE.

It belongs to the tachyplesin/polyphemusin family. In terms of tissue distribution, hemocytes.

It localises to the secreted. Significantly inhibits the growth of Gram-negative and Gram-positive bacteria. This Tachypleus tridentatus (Japanese horseshoe crab) protein is Tachyplesin-2.